The sequence spans 992 residues: UPF0182 protein BCG_3215c (992 aa).

Transmembrane regions (helical) follow at residues 18 to 38 (ILIM…RLID), 63 to 83 (IVVC…GLAL), 113 to 133 (LVGI…AQSY), 175 to 195 (LVSV…FGGI), 210 to 230 (VQLV…YWLD), 259 to 279 (KLIL…AIAL), and 287 to 307 (IGLV…PLIV). The segment at 906–938 (PTEAAVPPSPAANPPPPASGPQPPPVTAAPPVP) is disordered. Residues 912 to 938 (PPSPAANPPPPASGPQPPPVTAAPPVP) show a composition bias toward pro residues.

The protein belongs to the UPF0182 family.

Its subcellular location is the cell membrane. In Mycobacterium bovis (strain BCG / Pasteur 1173P2), this protein is UPF0182 protein BCG_3215c.